The following is a 98-amino-acid chain: NADH-ubiquinone oxidoreductase chain 4L (98 aa).

3 helical membrane-spanning segments follow: residues Met-1–Met-21, Ser-29–Leu-49, and Ile-61–Val-81.

This sequence belongs to the complex I subunit 4L family. As to quaternary structure, core subunit of respiratory chain NADH dehydrogenase (Complex I) which is composed of 45 different subunits.

The protein resides in the mitochondrion inner membrane. The enzyme catalyses a ubiquinone + NADH + 5 H(+)(in) = a ubiquinol + NAD(+) + 4 H(+)(out). Its function is as follows. Core subunit of the mitochondrial membrane respiratory chain NADH dehydrogenase (Complex I) which catalyzes electron transfer from NADH through the respiratory chain, using ubiquinone as an electron acceptor. Part of the enzyme membrane arm which is embedded in the lipid bilayer and involved in proton translocation. The polypeptide is NADH-ubiquinone oxidoreductase chain 4L (MT-ND4L) (Felis catus (Cat)).